We begin with the raw amino-acid sequence, 166 residues long: SsrA-binding protein (166 aa).

The segment at 143–166 is disordered; sequence HDKREDDKRKQANRDMKSALARYR. Positions 144-159 are enriched in basic and acidic residues; it reads DKREDDKRKQANRDMK.

This sequence belongs to the SmpB family.

The protein resides in the cytoplasm. Its function is as follows. Required for rescue of stalled ribosomes mediated by trans-translation. Binds to transfer-messenger RNA (tmRNA), required for stable association of tmRNA with ribosomes. tmRNA and SmpB together mimic tRNA shape, replacing the anticodon stem-loop with SmpB. tmRNA is encoded by the ssrA gene; the 2 termini fold to resemble tRNA(Ala) and it encodes a 'tag peptide', a short internal open reading frame. During trans-translation Ala-aminoacylated tmRNA acts like a tRNA, entering the A-site of stalled ribosomes, displacing the stalled mRNA. The ribosome then switches to translate the ORF on the tmRNA; the nascent peptide is terminated with the 'tag peptide' encoded by the tmRNA and targeted for degradation. The ribosome is freed to recommence translation, which seems to be the essential function of trans-translation. The polypeptide is SsrA-binding protein (Prochlorococcus marinus (strain MIT 9211)).